The following is a 225-amino-acid chain: MSDVAVAETPAVKTPTKASKATKAKATKIPKVKVVAAHPPFINMITEAVSNLKDRKGSSRVAIFKFITAKYTLGDQVNKTNAHLRSALKKGVVSKVLVQTNGIGANGRFRLAVAEKPPAVKKAATGEQKVMKTVAKKAVSGDKAKKTVAKKTGDKVKKVKSPKRIAKPAVKKVTKKAAAPTKSAANETAPKKAAATEAAPKKAAVTKAATKKTPARKAVGTAPKA.

The tract at residues 1–23 (MSDVAVAETPAVKTPTKASKATK) is disordered. An N-acetylserine modification is found at Ser2. A compositionally biased stretch (low complexity) spans 9-19 (TPAVKTPTKAS). In terms of domain architecture, H15 spans 37 to 113 (AHPPFINMIT…GANGRFRLAV (77 aa)). The segment covering 145 to 156 (KKTVAKKTGDKV) has biased composition (basic and acidic residues). Residues 145–225 (KKTVAKKTGD…RKAVGTAPKA (81 aa)) are disordered. The segment covering 157–175 (KKVKSPKRIAKPAVKKVTK) has biased composition (basic residues). The span at 176-208 (KAAAPTKSAANETAPKKAAATEAAPKKAAVTKA) shows a compositional bias: low complexity.

The protein belongs to the histone H1/H5 family.

Its subcellular location is the nucleus. The protein localises to the chromosome. Histones H1 are necessary for the condensation of nucleosome chains into higher-order structures. This is Histone H1.5 (hil-5) from Caenorhabditis elegans.